The following is a 364-amino-acid chain: Aminomethyltransferase (364 aa).

It belongs to the GcvT family. As to quaternary structure, the glycine cleavage system is composed of four proteins: P, T, L and H.

The catalysed reaction is N(6)-[(R)-S(8)-aminomethyldihydrolipoyl]-L-lysyl-[protein] + (6S)-5,6,7,8-tetrahydrofolate = N(6)-[(R)-dihydrolipoyl]-L-lysyl-[protein] + (6R)-5,10-methylene-5,6,7,8-tetrahydrofolate + NH4(+). The glycine cleavage system catalyzes the degradation of glycine. The polypeptide is Aminomethyltransferase (Thermotoga petrophila (strain ATCC BAA-488 / DSM 13995 / JCM 10881 / RKU-1)).